Consider the following 467-residue polypeptide: Sialic acid-binding Ig-like lectin 12 (467 aa).

Residues 1–18 (MLLLLLLLLLWGIKGVEG) form the signal peptide. Topologically, residues 19–353 (QNPQEVFTLN…ATLSEMMMGT (335 aa)) are extracellular. The region spanning 21–141 (PQEVFTLNVE…TKYNYMWDKM (121 aa)) is the Ig-like V-type domain. Disulfide bonds link Cys-40/Cys-176, Cys-45/Cys-108, and Cys-170/Cys-219. The N-linked (GlcNAc...) asparagine glycan is linked to Asn-46. Arg-126 contributes to the N-acetylneuraminate binding site. 2 consecutive Ig-like C2-type domains span residues 152-239 (PQIL…LNVS) and 242-339 (PKNL…LSLS). N-linked (GlcNAc...) asparagine glycans are attached at residues Asn-167, Asn-197, Asn-216, Asn-227, Asn-237, Asn-244, Asn-262, Asn-287, and Asn-294. Cys-278 and Cys-323 form a disulfide bridge. Residues 354-374 (FVGSGVTALLFLSVCILLLAV) form a helical membrane-spanning segment. Topologically, residues 375 to 467 (RSYRRKPARP…IKFPQRTAWP (93 aa)) are cytoplasmic. Positions 430–435 (IHYATL) match the ITIM motif motif. Tyr-432 and Tyr-455 each carry phosphotyrosine. Residues 453 to 458 (TEYSEI) carry the SLAM-like motif motif.

The protein belongs to the immunoglobulin superfamily. SIGLEC (sialic acid binding Ig-like lectin) family. In terms of assembly, homodimer; disulfide-linked. Interacts with PTPN6/SHP-1 and PTPN11/SHP-2 upon phosphorylation. Phosphorylation of Tyr-432 is required for binding to PTPN6 and PTPN11. Phosphorylation of Tyr-455 is involved in binding to PTPN6. Tyr-432 needs to be phosphorylated prior to Tyr-455. In terms of tissue distribution, expressed by monocytic/myeloid lineage cells. Found at higher levels in spleen, liver and heart. Found at lower levels in kidney and lung.

It is found in the membrane. Functionally, putative adhesion molecule that mediates sialic-acid dependent binding to cells. The sialic acid recognition site may be masked by cis interactions with sialic acids on the same cell surface. In the immune response, may act as an inhibitory receptor upon ligand induced tyrosine phosphorylation by recruiting cytoplasmic phosphatase(s) via their SH2 domain(s) that block signal transduction through dephosphorylation of signaling molecules. The sequence is that of Sialic acid-binding Ig-like lectin 12 (Siglec12) from Mus musculus (Mouse).